A 181-amino-acid chain; its full sequence is MTNSGALDTKFHALIQDQIRSEFTASQQYIAIAVFFDGADLPQLAKHFYAQALEERNHAMMLVQYLLDRDVEVEIPGIDPVCNNFTTPRDALALALDQERTVTEQISRLASVARDEGDHLGEQFMQWFLKEQVEEVAAMTTLVRIADRAGSNLFHIEDFVAREMSAAGADPTAPRAAGGAL.

The region spanning 5–150 is the Ferritin-like diiron domain; the sequence is GALDTKFHAL…TLVRIADRAG (146 aa). Lysine 10 is covalently cross-linked (Isoglutamyl lysine isopeptide (Lys-Gln) (interchain with Q-Cter in protein Pup)). Residues glutamate 22, glutamate 55, histidine 58, glutamate 99, and glutamine 132 each coordinate Fe cation.

The protein belongs to the ferritin family. Prokaryotic subfamily. As to quaternary structure, homooligomer of 24 subunits that are packed together to form an approximately spherical molecule with a central cavity, in which large amounts of iron can be stored.

It carries out the reaction 4 Fe(2+) + O2 + 4 H(+) = 4 Fe(3+) + 2 H2O. Iron-storage protein that displays ferroxidase activity, catalyzing the oxidation of Fe(2+) ions into Fe(3+) ions, that can then be deposited as a ferric-oxide mineral core within the central cavity of the protein complex. This chain is Ferritin BfrB (bfrB), found in Mycolicibacterium smegmatis (strain ATCC 700084 / mc(2)155) (Mycobacterium smegmatis).